A 482-amino-acid chain; its full sequence is tRNA sulfurtransferase (482 aa).

The THUMP domain occupies 61-165; it reads LAIRDALTRI…DDRLLLIKGR (105 aa). Residues 183 to 184, Lys265, Gly287, and Gln296 each bind ATP; that span reads LI. A disulfide bond links Cys344 and Cys456. Residues 404-482 form the Rhodanese domain; that stretch reads FGPNDVILDI…GFNNVKVYRP (79 aa). Cys456 serves as the catalytic Cysteine persulfide intermediate.

It belongs to the ThiI family.

The protein localises to the cytoplasm. It catalyses the reaction [ThiI sulfur-carrier protein]-S-sulfanyl-L-cysteine + a uridine in tRNA + 2 reduced [2Fe-2S]-[ferredoxin] + ATP + H(+) = [ThiI sulfur-carrier protein]-L-cysteine + a 4-thiouridine in tRNA + 2 oxidized [2Fe-2S]-[ferredoxin] + AMP + diphosphate. It carries out the reaction [ThiS sulfur-carrier protein]-C-terminal Gly-Gly-AMP + S-sulfanyl-L-cysteinyl-[cysteine desulfurase] + AH2 = [ThiS sulfur-carrier protein]-C-terminal-Gly-aminoethanethioate + L-cysteinyl-[cysteine desulfurase] + A + AMP + 2 H(+). It participates in cofactor biosynthesis; thiamine diphosphate biosynthesis. Its function is as follows. Catalyzes the ATP-dependent transfer of a sulfur to tRNA to produce 4-thiouridine in position 8 of tRNAs, which functions as a near-UV photosensor. Also catalyzes the transfer of sulfur to the sulfur carrier protein ThiS, forming ThiS-thiocarboxylate. This is a step in the synthesis of thiazole, in the thiamine biosynthesis pathway. The sulfur is donated as persulfide by IscS. This chain is tRNA sulfurtransferase, found in Escherichia coli O45:K1 (strain S88 / ExPEC).